The following is a 299-amino-acid chain: N-acetylneuraminate lyase (299 aa).

Aceneuramate-binding residues include serine 45 and serine 46. Residue tyrosine 134 is the Proton donor of the active site. The active-site Schiff-base intermediate with substrate is the lysine 161. Aceneuramate-binding residues include threonine 163, glycine 185, aspartate 187, and glutamate 188.

Belongs to the DapA family. NanA subfamily. Homotetramer.

It localises to the cytoplasm. The enzyme catalyses aceneuramate = aldehydo-N-acetyl-D-mannosamine + pyruvate. It participates in amino-sugar metabolism; N-acetylneuraminate degradation; D-fructose 6-phosphate from N-acetylneuraminate: step 1/5. Its function is as follows. Catalyzes the reversible aldol cleavage of N-acetylneuraminic acid (sialic acid; Neu5Ac) to form pyruvate and N-acetylmannosamine (ManNAc) via a Schiff base intermediate. The protein is N-acetylneuraminate lyase of Rhizobium meliloti (strain 1021) (Ensifer meliloti).